Reading from the N-terminus, the 103-residue chain is Serine rich endogenous peptide 9 (103 aa).

The first 25 residues, 1–25 (MENIFFSKLTQVFIVALLCIFIYRT), serve as a signal peptide directing secretion. Positions 54–103 (IYVKPPPLKSKDSNQKGKRGETYYKPNSEIGTGPSHSGHGGSSIEHVSSP) are disordered. Residues 62–75 (KSKDSNQKGKRGET) show a composition bias toward basic and acidic residues. Residues 82–96 (EIGTGPSHSGHGGSS) carry the SCOOP motif motif. Residues 84 to 103 (GTGPSHSGHGGSSIEHVSSP) are compositionally biased toward low complexity. The SxS motif essential for MIK2 binding signature appears at 88–90 (SHS).

Belongs to the serine rich endogenous peptide (SCOOP) phytocytokine family. Interacts with MIK2 (via extracellular leucine-rich repeat domain); this interaction triggers the formation of complex between MIK2 and the BAK1/SERK3 and SERK4 coreceptors, and subsequent BAK1 activation by phosphorylation. As to expression, mostly expressed in seedlings shoots and roots, and, to a lower extent, in leaves, but barely in flowers.

It is found in the cell membrane. The protein localises to the secreted. The protein resides in the extracellular space. Its subcellular location is the apoplast. Functionally, brassicaceae-specific phytocytokine (plant endogenous peptide released into the apoplast) perceived by MIK2 in a BAK1/SERK3 and SERK4 coreceptors-dependent manner, that modulates various physiological and antimicrobial processes including growth prevention and reactive oxygen species (ROS) response regulation. In Arabidopsis thaliana (Mouse-ear cress), this protein is Serine rich endogenous peptide 9.